Consider the following 279-residue polypeptide: Energy-coupling factor transporter ATP-binding protein EcfA1 (279 aa).

The 236-residue stretch at 5–240 folds into the ABC transporter domain; it reads IELKKVTFNY…GDELLQLGLD (236 aa). 40–47 contacts ATP; it reads GHNGSGKS.

It belongs to the ABC transporter superfamily. Energy-coupling factor EcfA family. Forms a stable energy-coupling factor (ECF) transporter complex composed of 2 membrane-embedded substrate-binding proteins (S component), 2 ATP-binding proteins (A component) and 2 transmembrane proteins (T component).

The protein localises to the cell membrane. Functionally, ATP-binding (A) component of a common energy-coupling factor (ECF) ABC-transporter complex. Unlike classic ABC transporters this ECF transporter provides the energy necessary to transport a number of different substrates. In Streptococcus pyogenes serotype M28 (strain MGAS6180), this protein is Energy-coupling factor transporter ATP-binding protein EcfA1.